The following is a 146-amino-acid chain: Protein U1 (146 aa).

Belongs to the nanovirus U1 protein family.

This is Protein U1 (DNA-U1) from Subterranean clover stunt virus (strain F) (SCSV).